Here is a 781-residue protein sequence, read N- to C-terminus: Chloride channel protein CLC-f (781 aa).

Disordered stretches follow at residues 1 to 41 (MSSG…QSPA) and 79 to 98 (RERH…EEDG). Residues 10–20 (NEDRHLLRSTD) are compositionally biased toward basic and acidic residues. 12 helical membrane passes run 129-149 (WALL…VAGF), 184-204 (ILLI…LLEI), 221-241 (FLAG…LGTG), 250-270 (SVDI…NNRE), 279-299 (GAAS…FFAI), 314-334 (FTTA…NALL), 350-370 (AAEL…SVVF), 388-408 (FGLP…IIAL), 433-453 (APGI…TALC), 457-477 (GLVG…GAVF), 502-522 (ALVG…TSVL), and 523-543 (LLFE…AVGL). A disordered region spans residues 553 to 584 (QGKESDSSEGRSTGRGYSSLSPSERKTEGVWR). The segment covering 575–584 (SERKTEGVWR) has biased composition (basic and acidic residues). 2 CBS domains span residues 621–677 (MSKN…NAST) and 699–763 (QERG…EMSR). The helical transmembrane segment at 726-746 (QLPVVKRGEVIHKGKRRKLLG) threads the bilayer.

Belongs to the chloride channel (TC 2.A.49) family. Homodimer.

The protein resides in the membrane. Voltage-gated chloride channel. This chain is Chloride channel protein CLC-f (CLC-F), found in Arabidopsis thaliana (Mouse-ear cress).